A 274-amino-acid polypeptide reads, in one-letter code: MSSKSHLPYAIRATNHPNPLTSKLFSIAEEKKTNVTVSADVTTSAELLDLADRLGPYIAVLKTHIDILTDLTPSTLSSLQSLATKHNFLIFEDRKFIDIGNTVQKQYHGGALRISEWAHIINCAILPGEGIVEALAQTTKSPDFKDANQRGLLILAEMTSKGSLATGEYTARSVEYARKYKGFVMGFVSTRALSEVLPEQKEESEDFVVFTTGVNLSDKGDKLGQQYQTPGSAVGRGADFIIAGRGIYKADDPVEAVQRYREEGWKAYEKRVGL.

Substrate contacts are provided by residues Asp-40, Lys-62–His-64, Asp-93–Thr-102, Tyr-227, and Arg-245. Lys-95 functions as the Proton donor in the catalytic mechanism.

Belongs to the OMP decarboxylase family.

It carries out the reaction orotidine 5'-phosphate + H(+) = UMP + CO2. It participates in pyrimidine metabolism; UMP biosynthesis via de novo pathway; UMP from orotate: step 2/2. This is Orotidine 5'-phosphate decarboxylase (pyrG) from Emericella nidulans (strain FGSC A4 / ATCC 38163 / CBS 112.46 / NRRL 194 / M139) (Aspergillus nidulans).